Consider the following 239-residue polypeptide: Zinc finger protein 575 (239 aa).

The tract at residues 1 to 62 is disordered; it reads MLGGSVKSEV…PQRPHRCPDC (62 aa). A compositionally biased stretch (basic and acidic residues) spans 22–31; sequence PETKAPHQDL. Residues 46–57 show a composition bias toward basic residues; sequence RPRRRPPPQRPH. 6 consecutive C2H2-type zinc fingers follow at residues 57 to 79, 85 to 107, 113 to 135, 141 to 163, 171 to 193, and 207 to 230; these read HRCP…RLAH, HPCP…RLTH, HSCP…LWTH, YPCP…RHTH, YPCP…RLCH, and HRCS…RSHH.

Belongs to the krueppel C2H2-type zinc-finger protein family.

The protein resides in the nucleus. May be involved in transcriptional regulation. This Mus musculus (Mouse) protein is Zinc finger protein 575 (Znf575).